A 531-amino-acid polypeptide reads, in one-letter code: tRNA-2-methylthio-N(6)-dimethylallyladenosine synthase (531 aa).

Positions 1–26 (MNEKQRLEQTGQIKTESHPADRKSAL) are disordered. A compositionally biased stretch (basic and acidic residues) spans 15–26 (TESHPADRKSAL). Residues 80-198 (RKFYIRTYGC…LPYILHEAYM (119 aa)) enclose the MTTase N-terminal domain. [4Fe-4S] cluster is bound by residues Cys89, Cys125, Cys159, Cys235, Cys239, and Cys242. In terms of domain architecture, Radical SAM core spans 221-451 (RKGKIKAWVN…NDLVQEIAAK (231 aa)). The region spanning 454–517 (KQYEGQVVEV…TWTLTGELVN (64 aa)) is the TRAM domain.

This sequence belongs to the methylthiotransferase family. MiaB subfamily. Monomer. It depends on [4Fe-4S] cluster as a cofactor.

It is found in the cytoplasm. It carries out the reaction N(6)-dimethylallyladenosine(37) in tRNA + (sulfur carrier)-SH + AH2 + 2 S-adenosyl-L-methionine = 2-methylsulfanyl-N(6)-dimethylallyladenosine(37) in tRNA + (sulfur carrier)-H + 5'-deoxyadenosine + L-methionine + A + S-adenosyl-L-homocysteine + 2 H(+). Its function is as follows. Catalyzes the methylthiolation of N6-(dimethylallyl)adenosine (i(6)A), leading to the formation of 2-methylthio-N6-(dimethylallyl)adenosine (ms(2)i(6)A) at position 37 in tRNAs that read codons beginning with uridine. The chain is tRNA-2-methylthio-N(6)-dimethylallyladenosine synthase from Geobacillus kaustophilus (strain HTA426).